The primary structure comprises 694 residues: N,N-dimethylglycine/sarcosine dehydrogenase (694 aa).

The protein in the N-terminal section; belongs to the NADH:flavin oxidoreductase/NADH oxidase family. In terms of assembly, monomer. The purified enzyme exists in the form of a monomer, dimer or polymer under non-denaturing conditions, but only the monomeric protein exhibits enzyme activity. It depends on FAD as a cofactor. NAD(+) serves as cofactor. Requires NADP(+) as cofactor.

It is found in the cytoplasm. It catalyses the reaction oxidized 2[4Fe-4S]-[ferredoxin] + N,N-dimethylglycine + H2O = reduced 2[4Fe-4S]-[ferredoxin] + sarcosine + formaldehyde + 2 H(+). The enzyme catalyses oxidized 2[4Fe-4S]-[ferredoxin] + sarcosine + H2O = reduced 2[4Fe-4S]-[ferredoxin] + formaldehyde + glycine + 2 H(+). Ca(2+) increases the activity by 12%, while the other metal ions tested have no or slightly inhibitory effects. The chelating agent EDTA inhibits the activity by 33%. Functionally, involved in degradation of glycine betaine. Catalyzes the demethylation of both N,N-dimethylglycine (DMG) and sarcosine, releasing formaldehyde and forming glycine as the final product. Does not show activity toward trimethylamine (TMA), histamine, glycine betaine (GB) or choline. The C-N bond in DMG is probably oxidized by removal of a hydride equivalent to form a labile imine intermediate, which is then spontaneously hydrolyzed in the presence of water, producing sarcosine and formaldehyde. The two protons subtracted from DMG are transferred to the non-covalently bound FAD, resulting in the reduced form of FAD, which is subsequently reoxidized by coupling with reduction of the enzyme-bound NAD(P)(+). Regeneration of NAD(P)(+) is achieved by electron transfer to the [4Fe-4S] cluster in the probable membrane-anchored ferredoxin csal_0991. This chain is N,N-dimethylglycine/sarcosine dehydrogenase, found in Chromohalobacter salexigens (strain ATCC BAA-138 / DSM 3043 / CIP 106854 / NCIMB 13768 / 1H11).